The following is a 453-amino-acid chain: Beta-agarase AgaB34 (453 aa).

Positions methionine 1–alanine 23 are cleaved as a signal peptide. The region spanning alanine 24–glycine 301 is the GH16 domain. The Nucleophile role is filled by glutamate 147. Catalysis depends on glutamate 152, which acts as the Proton donor. The region spanning proline 313–leucine 453 is the Ricin B-type lectin domain. Disulfide bonds link cysteine 327/cysteine 346, cysteine 375/cysteine 394, and cysteine 423/cysteine 442.

It belongs to the glycosyl hydrolase 16 family.

Its subcellular location is the secreted. The enzyme catalyses Hydrolysis of (1-&gt;4)-beta-D-galactosidic linkages in agarose, giving the tetramer as the predominant product.. In Agarivorans albus, this protein is Beta-agarase AgaB34.